We begin with the raw amino-acid sequence, 79 residues long: Dolichyl-diphosphooligosaccharide--protein glycosyltransferase subunit TMEM258 (79 aa).

2 consecutive transmembrane segments (helical) span residues 18–38 and 55–75; these read LPLL…AFTM and FIAA…LLWV.

Belongs to the OST5 family. Component of the oligosaccharyltransferase (OST) complex.

The protein localises to the membrane. The protein operates within protein modification; protein glycosylation. Subunit of the oligosaccharyl transferase (OST) complex that catalyzes the initial transfer of a defined glycan (Glc(3)Man(9)GlcNAc(2) in eukaryotes) from the lipid carrier dolichol-pyrophosphate to an asparagine residue within an Asn-X-Ser/Thr consensus motif in nascent polypeptide chains, the first step in protein N-glycosylation. N-glycosylation occurs cotranslationally and the complex associates with the Sec61 complex at the channel-forming translocon complex that mediates protein translocation across the endoplasmic reticulum (ER). All subunits are required for a maximal enzyme activity. The chain is Dolichyl-diphosphooligosaccharide--protein glycosyltransferase subunit TMEM258 from Caenorhabditis briggsae.